We begin with the raw amino-acid sequence, 866 residues long: Probable outer membrane usher protein ElfC (866 aa).

An N-terminal signal peptide occupies residues 1-35 (MYRTHRQHSLLSSGGVPSFIGGLVVFVSAAFNAQA).

The protein belongs to the fimbrial export usher family.

It is found in the cell outer membrane. Part of the elfADCG fimbrial operon, which could be required for adherence to host epithelial cells. Could be involved in the export and assembly of the ElfA fimbrial subunits across the outer membrane. In Escherichia coli O157:H7, this protein is Probable outer membrane usher protein ElfC (elfC).